A 251-amino-acid chain; its full sequence is Cytochrome c oxidase subunit 2 (251 aa).

The propeptide at 1–15 (MLDLLRLQLTTFIMN) is removed in mature form. The Mitochondrial intermembrane portion of the chain corresponds to 16-30 (DVPTPYACYFQDSAT). Residues 31–64 (PNQEGILELHDNIMFYLLVILGLVSWMLYTIVMT) form a helical membrane-spanning segment. The Mitochondrial matrix segment spans residues 65-78 (YSKNPIAYKYIKHG). Residues 79 to 108 (QTIEVIWTIFPAVILLIIAFPSFILLYLCD) form a helical membrane-spanning segment. The Mitochondrial intermembrane segment spans residues 109 to 251 (EVISPAMTIK…PKFLEWLNEQ (143 aa)). Cu cation-binding residues include histidine 186, cysteine 221, glutamate 223, cysteine 225, histidine 229, and methionine 232. Residue glutamate 223 coordinates Mg(2+).

The protein belongs to the cytochrome c oxidase subunit 2 family. Component of the cytochrome c oxidase (complex IV, CIV), a multisubunit enzyme composed of 12 subunits. The complex is composed of a catalytic core of 3 subunits COX1, COX2 and COX3, encoded in the mitochondrial DNA, and 9 supernumerary subunits COX4, COX5A (or COX5B), COX6, COX7, COX8, COX9, COX12, COX13 and COX26, which are encoded in the nuclear genome. The complex exists as a monomer or a dimer and forms supercomplexes (SCs) in the inner mitochondrial membrane with a dimer of ubiquinol-cytochrome c oxidoreductase (cytochrome b-c1 complex, complex III, CIII), resulting in 2 different assemblies (supercomplexes III(2)IV and III(2)IV(2)). The cofactor is Cu cation. Post-translationally, the N-terminal sequence of COX2 is processed by IMP1.

The protein resides in the mitochondrion inner membrane. The enzyme catalyses 4 Fe(II)-[cytochrome c] + O2 + 8 H(+)(in) = 4 Fe(III)-[cytochrome c] + 2 H2O + 4 H(+)(out). Component of the cytochrome c oxidase, the last enzyme in the mitochondrial electron transport chain which drives oxidative phosphorylation. The respiratory chain contains 3 multisubunit complexes succinate dehydrogenase (complex II, CII), ubiquinol-cytochrome c oxidoreductase (cytochrome b-c1 complex, complex III, CIII) and cytochrome c oxidase (complex IV, CIV), that cooperate to transfer electrons derived from NADH and succinate to molecular oxygen, creating an electrochemical gradient over the inner membrane that drives transmembrane transport and the ATP synthase. Cytochrome c oxidase is the component of the respiratory chain that catalyzes the reduction of oxygen to water. Electrons originating from reduced cytochrome c in the intermembrane space (IMS) are transferred via the dinuclear copper A center (CU(A)) of COX2 and heme A of COX1 to the active site in COX1, a binuclear center (BNC) formed by heme A3 and copper B (CU(B)). The BNC reduces molecular oxygen to 2 water molecules unsing 4 electrons from cytochrome c in the IMS and 4 protons from the mitochondrial matrix. COX2 is a catalytic core subunit which transfers the electrons from cytochrome c via its dinuclear copper A center (CU(A)) to the BNC of the COX1. This chain is Cytochrome c oxidase subunit 2 (COX2), found in Saccharomyces cerevisiae (strain ATCC 204508 / S288c) (Baker's yeast).